We begin with the raw amino-acid sequence, 546 residues long: Chaperonin GroEL (546 aa).

ATP is bound by residues 30-33 (TLGP), Lys51, 87-91 (DGTTT), Gly415, 479-481 (NAA), and Asp495.

Belongs to the chaperonin (HSP60) family. Forms a cylinder of 14 subunits composed of two heptameric rings stacked back-to-back. Interacts with the co-chaperonin GroES.

It is found in the cytoplasm. It carries out the reaction ATP + H2O + a folded polypeptide = ADP + phosphate + an unfolded polypeptide.. Together with its co-chaperonin GroES, plays an essential role in assisting protein folding. The GroEL-GroES system forms a nano-cage that allows encapsulation of the non-native substrate proteins and provides a physical environment optimized to promote and accelerate protein folding. This Allochromatium vinosum (Chromatium vinosum) protein is Chaperonin GroEL.